Reading from the N-terminus, the 486-residue chain is mRNA cap guanine-N(7) methyltransferase (486 aa).

The segment at 1–92 (MAGGADLDEP…ADRKAARERA (92 aa)) is disordered. Composition is skewed to basic and acidic residues over residues 9–28 (EPPR…DSTH), 35–54 (VPRD…EPAR), and 82–92 (EADRKAARERA). One can recognise an mRNA cap 0 methyltransferase domain in the interval 135-486 (SRIKGLRSFN…FYVGFCFYKV (352 aa)). 144–145 (NN) contacts mRNA. S-adenosyl-L-methionine contacts are provided by residues Lys-148, Gly-177, Asp-201, Asp-247, 281 to 283 (MFC), and Tyr-286. Basic and acidic residues predominate over residues 333–351 (VEMKKKQAEAGDGSKKDDG). Residues 333–365 (VEMKKKQAEAGDGSKKDDGGDAEEGELDEPEVE) form a disordered region. Over residues 352–363 (GDAEEGELDEPE) the composition is skewed to acidic residues.

The protein belongs to the class I-like SAM-binding methyltransferase superfamily. mRNA cap 0 methyltransferase family.

It localises to the nucleus. The catalysed reaction is a 5'-end (5'-triphosphoguanosine)-ribonucleoside in mRNA + S-adenosyl-L-methionine = a 5'-end (N(7)-methyl 5'-triphosphoguanosine)-ribonucleoside in mRNA + S-adenosyl-L-homocysteine. In terms of biological role, responsible for methylating the 5'-cap structure of mRNAs. The polypeptide is mRNA cap guanine-N(7) methyltransferase (ABD1) (Pyricularia oryzae (strain 70-15 / ATCC MYA-4617 / FGSC 8958) (Rice blast fungus)).